A 523-amino-acid polypeptide reads, in one-letter code: 2-isopropylmalate synthase (523 aa).

The Pyruvate carboxyltransferase domain maps to 5-267; sequence VIIFDTTLRD…HTRINHQEIW (263 aa). Mn(2+) is bound by residues aspartate 14, histidine 202, histidine 204, and asparagine 238. The interval 392 to 523 is regulatory domain; that stretch reads RLDYFSVQSG…QNKENNKETV (132 aa).

It belongs to the alpha-IPM synthase/homocitrate synthase family. LeuA type 1 subfamily. Homodimer. Mn(2+) serves as cofactor.

The protein localises to the cytoplasm. The catalysed reaction is 3-methyl-2-oxobutanoate + acetyl-CoA + H2O = (2S)-2-isopropylmalate + CoA + H(+). It functions in the pathway amino-acid biosynthesis; L-leucine biosynthesis; L-leucine from 3-methyl-2-oxobutanoate: step 1/4. Its function is as follows. Catalyzes the condensation of the acetyl group of acetyl-CoA with 3-methyl-2-oxobutanoate (2-ketoisovalerate) to form 3-carboxy-3-hydroxy-4-methylpentanoate (2-isopropylmalate). The polypeptide is 2-isopropylmalate synthase (Citrobacter koseri (strain ATCC BAA-895 / CDC 4225-83 / SGSC4696)).